The primary structure comprises 408 residues: LL-diaminopimelate aminotransferase (408 aa).

Residues Tyr15 and Gly42 each coordinate substrate. Pyridoxal 5'-phosphate-binding positions include Tyr72, 108 to 109, Tyr132, Asn187, Tyr218, and 246 to 248; these read SK and SFS. Substrate is bound by residues Lys109, Tyr132, and Asn187. Lys249 carries the N6-(pyridoxal phosphate)lysine modification. 2 residues coordinate pyridoxal 5'-phosphate: Arg257 and Asn292. Asn292 and Arg388 together coordinate substrate.

This sequence belongs to the class-I pyridoxal-phosphate-dependent aminotransferase family. LL-diaminopimelate aminotransferase subfamily. Homodimer. Requires pyridoxal 5'-phosphate as cofactor.

The enzyme catalyses (2S,6S)-2,6-diaminopimelate + 2-oxoglutarate = (S)-2,3,4,5-tetrahydrodipicolinate + L-glutamate + H2O + H(+). It participates in amino-acid biosynthesis; L-lysine biosynthesis via DAP pathway; LL-2,6-diaminopimelate from (S)-tetrahydrodipicolinate (aminotransferase route): step 1/1. Functionally, involved in the synthesis of meso-diaminopimelate (m-DAP or DL-DAP), required for both lysine and peptidoglycan biosynthesis. Catalyzes the direct conversion of tetrahydrodipicolinate to LL-diaminopimelate. The sequence is that of LL-diaminopimelate aminotransferase from Prochlorococcus marinus (strain MIT 9303).